A 313-amino-acid chain; its full sequence is Ribosomal protein L11 methyltransferase (313 aa).

Positions 154, 179, 201, and 242 each coordinate S-adenosyl-L-methionine.

Belongs to the methyltransferase superfamily. PrmA family.

It localises to the cytoplasm. It catalyses the reaction L-lysyl-[protein] + 3 S-adenosyl-L-methionine = N(6),N(6),N(6)-trimethyl-L-lysyl-[protein] + 3 S-adenosyl-L-homocysteine + 3 H(+). In terms of biological role, methylates ribosomal protein L11. In Xanthomonas oryzae pv. oryzae (strain MAFF 311018), this protein is Ribosomal protein L11 methyltransferase.